Here is a 117-residue protein sequence, read N- to C-terminus: Large ribosomal subunit protein bL19 (117 aa).

The protein belongs to the bacterial ribosomal protein bL19 family.

Its function is as follows. This protein is located at the 30S-50S ribosomal subunit interface and may play a role in the structure and function of the aminoacyl-tRNA binding site. This chain is Large ribosomal subunit protein bL19, found in Sorangium cellulosum (strain So ce56) (Polyangium cellulosum (strain So ce56)).